A 140-amino-acid polypeptide reads, in one-letter code: 3-hydroxyacyl-[acyl-carrier-protein] dehydratase FabZ (140 aa).

Histidine 48 is a catalytic residue.

This sequence belongs to the thioester dehydratase family. FabZ subfamily.

It is found in the cytoplasm. The catalysed reaction is a (3R)-hydroxyacyl-[ACP] = a (2E)-enoyl-[ACP] + H2O. Its function is as follows. Involved in unsaturated fatty acids biosynthesis. Catalyzes the dehydration of short chain beta-hydroxyacyl-ACPs and long chain saturated and unsaturated beta-hydroxyacyl-ACPs. In Oceanobacillus iheyensis (strain DSM 14371 / CIP 107618 / JCM 11309 / KCTC 3954 / HTE831), this protein is 3-hydroxyacyl-[acyl-carrier-protein] dehydratase FabZ.